Reading from the N-terminus, the 63-residue chain is Large ribosomal subunit protein uL30 (63 aa).

This sequence belongs to the universal ribosomal protein uL30 family. Part of the 50S ribosomal subunit.

This chain is Large ribosomal subunit protein uL30, found in Xanthomonas campestris pv. campestris (strain 8004).